Reading from the N-terminus, the 142-residue chain is Large ribosomal subunit protein uL11 (142 aa).

The protein belongs to the universal ribosomal protein uL11 family. As to quaternary structure, part of the ribosomal stalk of the 50S ribosomal subunit. Interacts with L10 and the large rRNA to form the base of the stalk. L10 forms an elongated spine to which L12 dimers bind in a sequential fashion forming a multimeric L10(L12)X complex. Post-translationally, one or more lysine residues are methylated.

In terms of biological role, forms part of the ribosomal stalk which helps the ribosome interact with GTP-bound translation factors. This is Large ribosomal subunit protein uL11 from Photobacterium profundum (strain SS9).